A 348-amino-acid polypeptide reads, in one-letter code: UDP-3-O-acylglucosamine N-acyltransferase (348 aa).

His243 (proton acceptor) is an active-site residue.

Belongs to the transferase hexapeptide repeat family. LpxD subfamily. In terms of assembly, homotrimer.

The enzyme catalyses a UDP-3-O-[(3R)-3-hydroxyacyl]-alpha-D-glucosamine + a (3R)-hydroxyacyl-[ACP] = a UDP-2-N,3-O-bis[(3R)-3-hydroxyacyl]-alpha-D-glucosamine + holo-[ACP] + H(+). The protein operates within bacterial outer membrane biogenesis; LPS lipid A biosynthesis. Catalyzes the N-acylation of UDP-3-O-acylglucosamine using 3-hydroxyacyl-ACP as the acyl donor. Is involved in the biosynthesis of lipid A, a phosphorylated glycolipid that anchors the lipopolysaccharide to the outer membrane of the cell. The sequence is that of UDP-3-O-acylglucosamine N-acyltransferase from Hahella chejuensis (strain KCTC 2396).